The primary structure comprises 593 residues: UvrABC system protein C (593 aa).

The GIY-YIG domain maps to 17–94 (MEPGCYLMKD…IKQYQPRYNI (78 aa)). A UVR domain is found at 199 to 234 (KTILKSLEERMLTASESLDFERAKEYRDLIQHIQNL).

This sequence belongs to the UvrC family. As to quaternary structure, interacts with UvrB in an incision complex.

It localises to the cytoplasm. Its function is as follows. The UvrABC repair system catalyzes the recognition and processing of DNA lesions. UvrC both incises the 5' and 3' sides of the lesion. The N-terminal half is responsible for the 3' incision and the C-terminal half is responsible for the 5' incision. The sequence is that of UvrABC system protein C from Staphylococcus aureus (strain bovine RF122 / ET3-1).